Reading from the N-terminus, the 253-residue chain is Malonyl-[acyl-carrier protein] O-methyltransferase (253 aa).

The protein belongs to the methyltransferase superfamily.

It carries out the reaction malonyl-[ACP] + S-adenosyl-L-methionine = malonyl-[ACP] methyl ester + S-adenosyl-L-homocysteine. Its pathway is cofactor biosynthesis; biotin biosynthesis. In terms of biological role, converts the free carboxyl group of a malonyl-thioester to its methyl ester by transfer of a methyl group from S-adenosyl-L-methionine (SAM). It allows to synthesize pimeloyl-ACP via the fatty acid synthetic pathway. The chain is Malonyl-[acyl-carrier protein] O-methyltransferase from Pectobacterium atrosepticum (strain SCRI 1043 / ATCC BAA-672) (Erwinia carotovora subsp. atroseptica).